A 224-amino-acid polypeptide reads, in one-letter code: uncharacterized protein (224 aa).

A compositionally biased stretch (pro residues) spans 44–139 (TSPPIVPLPT…PSPPPSPSPL (96 aa)). The interval 44 to 145 (TSPPIVPLPT…PSPLGEPMYY (102 aa)) is disordered.

This is an uncharacterized protein from Lepidoptera (butterflies and moths).